The following is a 1934-amino-acid chain: Tudor domain-containing protein 15 (1934 aa).

Tudor domains are found at residues 59-117, 289-347, 531-589, 799-856, 1011-1070, and 1342-1401; these read NVEI…LFEL, CDNF…FILV, KPEP…FCEL, PYEI…FLLL, DSNK…FPEL, and KPLV…FLTV. The disordered stretch occupies residues 1490–1510; that stretch reads VRPGDNEMKKGKSNESEGSMN. The segment covering 1491-1504 has biased composition (basic and acidic residues); sequence RPGDNEMKKGKSNE. Tudor domains lie at 1574 to 1633 and 1780 to 1838; these read SIEK…IRNI and FIIP…PEEL.

The chain is Tudor domain-containing protein 15 (TDRD15) from Homo sapiens (Human).